We begin with the raw amino-acid sequence, 296 residues long: 4-diphosphocytidyl-2-C-methyl-D-erythritol kinase (296 aa).

K12 is a catalytic residue. 94–104 (PAQAGMGGGSS) contacts ATP. D136 is an active-site residue.

This sequence belongs to the GHMP kinase family. IspE subfamily.

It carries out the reaction 4-CDP-2-C-methyl-D-erythritol + ATP = 4-CDP-2-C-methyl-D-erythritol 2-phosphate + ADP + H(+). It participates in isoprenoid biosynthesis; isopentenyl diphosphate biosynthesis via DXP pathway; isopentenyl diphosphate from 1-deoxy-D-xylulose 5-phosphate: step 3/6. Functionally, catalyzes the phosphorylation of the position 2 hydroxy group of 4-diphosphocytidyl-2C-methyl-D-erythritol. This chain is 4-diphosphocytidyl-2-C-methyl-D-erythritol kinase, found in Variovorax paradoxus (strain S110).